A 290-amino-acid polypeptide reads, in one-letter code: Acetyl-coenzyme A carboxylase carboxyl transferase subunit beta (290 aa).

Positions 27 to 290 (LWVKCPSCES…LQKQPADAVA (264 aa)) constitute a CoA carboxyltransferase N-terminal domain. Positions 31, 34, 50, and 53 each coordinate Zn(2+). The C4-type zinc finger occupies 31-53 (CPSCESTLYRTDVEANLHVCPKC).

This sequence belongs to the AccD/PCCB family. As to quaternary structure, acetyl-CoA carboxylase is a heterohexamer composed of biotin carboxyl carrier protein (AccB), biotin carboxylase (AccC) and two subunits each of ACCase subunit alpha (AccA) and ACCase subunit beta (AccD). Zn(2+) serves as cofactor.

The protein localises to the cytoplasm. The catalysed reaction is N(6)-carboxybiotinyl-L-lysyl-[protein] + acetyl-CoA = N(6)-biotinyl-L-lysyl-[protein] + malonyl-CoA. Its pathway is lipid metabolism; malonyl-CoA biosynthesis; malonyl-CoA from acetyl-CoA: step 1/1. In terms of biological role, component of the acetyl coenzyme A carboxylase (ACC) complex. Biotin carboxylase (BC) catalyzes the carboxylation of biotin on its carrier protein (BCCP) and then the CO(2) group is transferred by the transcarboxylase to acetyl-CoA to form malonyl-CoA. The polypeptide is Acetyl-coenzyme A carboxylase carboxyl transferase subunit beta (Cupriavidus taiwanensis (strain DSM 17343 / BCRC 17206 / CCUG 44338 / CIP 107171 / LMG 19424 / R1) (Ralstonia taiwanensis (strain LMG 19424))).